The chain runs to 566 residues: Sulfite reductase [NADPH] hemoprotein beta-component (566 aa).

[4Fe-4S] cluster contacts are provided by Cys430, Cys436, Cys475, and Cys479. Residue Cys479 participates in siroheme binding.

The protein belongs to the nitrite and sulfite reductase 4Fe-4S domain family. As to quaternary structure, alpha(8)-beta(8). The alpha component is a flavoprotein, the beta component is a hemoprotein. It depends on siroheme as a cofactor. [4Fe-4S] cluster serves as cofactor.

It catalyses the reaction hydrogen sulfide + 3 NADP(+) + 3 H2O = sulfite + 3 NADPH + 4 H(+). It functions in the pathway sulfur metabolism; hydrogen sulfide biosynthesis; hydrogen sulfide from sulfite (NADPH route): step 1/1. In terms of biological role, component of the sulfite reductase complex that catalyzes the 6-electron reduction of sulfite to sulfide. This is one of several activities required for the biosynthesis of L-cysteine from sulfate. This is Sulfite reductase [NADPH] hemoprotein beta-component from Baumannia cicadellinicola subsp. Homalodisca coagulata.